The following is a 481-amino-acid chain: GTPase Obg (481 aa).

The region spanning 2–159 (TTFVDRVVLH…LDAVLELKSV (158 aa)) is the Obg domain. In terms of domain architecture, OBG-type G spans 160–330 (ADIGLVGYPS…LMFAMGELVA (171 aa)). GTP contacts are provided by residues 166 to 173 (GYPSAGKS), 191 to 195 (FTTLV), 212 to 215 (DVPG), 282 to 285 (NKID), and 311 to 313 (SAA). Mg(2+) is bound by residues Ser-173 and Thr-193. In terms of domain architecture, OCT spans 348–426 (PKAVDDAGFT…IGEREFDWHP (79 aa)). The segment at 440–481 (DQRLAEKTQRPSAAERLAARKARRQRPGDEPESDELDGDSGE) is disordered. Acidic residues predominate over residues 469 to 481 (EPESDELDGDSGE).

It belongs to the TRAFAC class OBG-HflX-like GTPase superfamily. OBG GTPase family. Monomer. Mg(2+) serves as cofactor.

The protein resides in the cytoplasm. An essential GTPase which binds GTP, GDP and possibly (p)ppGpp with moderate affinity, with high nucleotide exchange rates and a fairly low GTP hydrolysis rate. Plays a role in control of the cell cycle, stress response, ribosome biogenesis and in those bacteria that undergo differentiation, in morphogenesis control. This chain is GTPase Obg, found in Salinispora arenicola (strain CNS-205).